We begin with the raw amino-acid sequence, 480 residues long: MSTSPKPVAPIHVIGGGLAGSEAAWQIAQAGVPVVLHEMRRDLPSSSGAVGPTKVRTDAHQTDGLAEMVCSNSFRSDDWQFNAVGLLHAEMRKLDSLILSAADQHQVPAGGALAVDRDGFSAEVTRRIEAHPLITIEREEVAGLPPEDWDSVVVATGPLTSPALADAILELSGEGQLSFFDAIAPIIHVESIDMDIAWRQSRYDKEGPGGDAAAYINCPMNKAQYEAFIDALLEGPKAEFKDWEHVPYFDGCLPIEVMAERGRETLRHGPMKPVGLTNPRDPTVKAYAIVQLRQDNALGTLWNMVGFQTKLKHGAQAEVFRMIPGLQNAQFARLGGLHRNTFINSPRLLDRSLRMKVAPRLRFAGQMTGVEGYVESAATGLLAGRFAAAERLGKTLDAPPPTTALGALVDHVTGGHIEGEALGKTSFQPMNINYGLLPPTETPKVGDDGVKIPMKERGRAKKRLMSLRALADLDQWMAGA.

An FAD-binding site is contributed by 15–20 (GGGLAG).

It belongs to the MnmG family. TrmFO subfamily. It depends on FAD as a cofactor.

The protein resides in the cytoplasm. It catalyses the reaction uridine(54) in tRNA + (6R)-5,10-methylene-5,6,7,8-tetrahydrofolate + NADH + H(+) = 5-methyluridine(54) in tRNA + (6S)-5,6,7,8-tetrahydrofolate + NAD(+). The catalysed reaction is uridine(54) in tRNA + (6R)-5,10-methylene-5,6,7,8-tetrahydrofolate + NADPH + H(+) = 5-methyluridine(54) in tRNA + (6S)-5,6,7,8-tetrahydrofolate + NADP(+). Functionally, catalyzes the folate-dependent formation of 5-methyl-uridine at position 54 (M-5-U54) in all tRNAs. The chain is Methylenetetrahydrofolate--tRNA-(uracil-5-)-methyltransferase TrmFO from Caulobacter sp. (strain K31).